Reading from the N-terminus, the 293-residue chain is Glycerophosphodiester phosphodiesterase (293 aa).

The signal sequence occupies residues M1–A26. The GP-PDE domain maps to I38 to K290. The active-site Proton acceptor is the H43. Positions 43, 44, and 70 each coordinate sn-glycerol 3-phosphate. Ca(2+) is bound by residues E70 and D72. Residues H85, E152, and Q188 each contribute to the sn-glycerol 3-phosphate site. The active-site Proton donor is H85. E152 provides a ligand contact to Ca(2+).

The protein belongs to the glycerophosphoryl diester phosphodiesterase family. Requires Ca(2+) as cofactor.

Its subcellular location is the secreted. It carries out the reaction a sn-glycero-3-phosphodiester + H2O = an alcohol + sn-glycerol 3-phosphate + H(+). Functionally, glycerophosphodiester phosphodiesterase hydrolyzes glycerophosphodiesters into glycerol-3-phosphate (G3P) and the corresponding alcohol. Involved in wall teichoic acid (WTA) metabolism during phosphate starvation. Catalyzes the degradation of WTA, enabling the utilization of WTA as a phosphate reserve under limiting conditions. Is highly selective for the poly(gylcerol phosphate) WTA backbone and catalyzes exolytic cleavage of individual monomer units. In vitro is active toward the WTA oligomer mimics glycerophosphoglycerol (GPG) and bis-glycerophosphoglycerol (bGPG). This is Glycerophosphodiester phosphodiesterase from Bacillus subtilis (strain 168).